The following is a 416-amino-acid chain: Keratin, type I cuticular Ha1 (416 aa).

The tract at residues 1-56 (MPYNFCLPSLSCRTSCSSRPCVPPSCHSCTLPGACNIPANVSNCNWFCEGSFNGSE) is head. The region spanning 56 to 367 (EKETMQFLND…SLLESEDCNL (312 aa)) is the IF rod domain. Residues 57 to 91 (KETMQFLNDRLASYLEKVRQLERDNAELENLIRER) form a coil 1A region. The tract at residues 92–102 (SQQQEPLLCPS) is linker 1. Residues 103-203 (YQSYFKTIEE…HEQEVNTLRC (101 aa)) are coil 1B. The linker 12 stretch occupies residues 204–219 (QLGDRLNVEVDAAPTV). A coil 2 region spans residues 220-363 (DLNRVLNETR…NTYRSLLESE (144 aa)). The tail stretch occupies residues 364–416 (DCNLPSNPCATTNACSKPIGPCLSNPCTSCVPPAPCTPCAPRPRCGPCNSFVR).

It belongs to the intermediate filament family. As to expression, present in scalp but not in hairless skin. Abundantly expressed in the differentiating cortex of growing (anagen) hair. Expression is restricted to the keratinocytes of the hair cortex and is absent from inner root sheath and medulla.

The chain is Keratin, type I cuticular Ha1 (KRT31) from Homo sapiens (Human).